The chain runs to 644 residues: Zinc finger protein 74 (644 aa).

A KRAB domain is found at 43-114 (VSFKDVAVDF…QREVPRGPCP (72 aa)). 12 consecutive C2H2-type zinc fingers follow at residues 248–270 (FVCG…RRWH), 276–298 (YKCD…RRIH), 304–326 (FFCG…QRIH), 332–354 (YKCS…LRVH), 360–382 (YRCG…HRIH), 388–410 (YQCG…EKIH), 416–438 (FKCS…QRTH), 444–466 (FKCA…RRIH), 472–494 (FKCN…RRIH), 500–522 (FDCS…QRIH), 528–550 (YKCS…QKIH), and 556–578 (FKCE…QRLH). Residue Lys-582 forms a Glycyl lysine isopeptide (Lys-Gly) (interchain with G-Cter in SUMO2) linkage.

It belongs to the krueppel C2H2-type zinc-finger protein family. Highly expressed in the fetal brain.

It is found in the nucleus. Functionally, may play a role in RNA metabolism. This chain is Zinc finger protein 74 (ZNF74), found in Homo sapiens (Human).